Reading from the N-terminus, the 454-residue chain is Lamina-associated polypeptide 2, isoforms beta/gamma (454 aa).

The segment at 1–410 is nucleoplasmic; sequence MPEFLEDPSV…KSEKTKKGRS (410 aa). Residues 5–48 form the LEM-like domain; that stretch reads LEDPSVLTKDKLKSELVANNVTLPAGEQRKDVYVQLYLQHLTAR. Disordered stretches follow at residues 47–117 and 149–265; these read ARNR…ELTN and LREQ…VETS. A linker region spans residues 49–108; it reads NRPPLPAGTNSKGPPDFSSDEEREPTPVLGSGAAAAGRSRAAVGRKATKKTDKPRQEDKD. Thr-57 is modified (phosphothreonine). 3 positions are modified to phosphoserine: Ser-59, Ser-66, and Ser-67. At Thr-74 the chain carries Phosphothreonine. Low complexity predominate over residues 78 to 93; it reads GSGAAAAGRSRAAVGR. Ser-79 carries the phosphoserine modification. Omega-N-methylarginine is present on residues Arg-86 and Arg-88. Basic and acidic residues predominate over residues 97–106; that stretch reads KKTDKPRQED. Residues 107-117 show a composition bias toward acidic residues; it reads KDDLDVTELTN. Residues 109–153 enclose the LEM domain; the sequence is DLDVTELTNEDLLDQLVKYGVNPGPIVGTTRKLYEKKLLKLREQG. The segment at 138 to 243 is NAKAP95-binding N; that stretch reads TRKLYEKKLL…TSGSSKGGPL (106 aa). Thr-154 carries the post-translational modification Phosphothreonine. The span at 155–178 shows a compositional bias: polar residues; sequence ESRSSTPLPTISSSAENTRQNGSN. A phosphoserine mark is found at Ser-156 and Ser-159. Thr-160 and Thr-164 each carry phosphothreonine. Phosphoserine occurs at positions 166, 168, 177, 180, 184, and 190. The segment covering 179–203 has biased composition (basic and acidic residues); sequence DSDRYSDNEEDSKIELKLEKREPLK. An N6-acetyllysine modification is found at Lys-207. Phosphothreonine is present on Thr-211. Over residues 220–237 the composition is skewed to polar residues; it reads NQSYSQAGITETEWTSGS. A phosphoserine mark is found at Ser-222, Ser-224, Ser-250, Ser-254, Ser-265, Ser-292, and Ser-306. A binds lamins B region spans residues 299-371; that stretch reads TGNFKHASPI…SCRRPIKGAA (73 aa). An NAKAP95-binding C region spans residues 300–374; it reads GNFKHASPIL…RPIKGAAGRP (75 aa). Thr-312 is modified (phosphothreonine). Residue Ser-315 is modified to Phosphoserine. A Citrulline modification is found at Arg-320. Phosphoserine is present on residues Ser-362, Ser-378, and Ser-385. An N6-acetyllysine modification is found at Lys-389. Residue Lys-401 forms a Glycyl lysine isopeptide (Lys-Gly) (interchain with G-Cter in SUMO2) linkage. Residue Ser-402 is modified to Phosphoserine. A helical; Signal-anchor for type II membrane protein transmembrane segment spans residues 411 to 434; the sequence is IPVWIKILLFVVVAVFLFLVYQAM. The Lumenal segment spans residues 435-454; it reads ETNQVNPFSNFLHVDPRKSN.

Belongs to the LEM family. As to quaternary structure, interacts with LMNB1, LMNB2, BANF1, AKAP8L, GMCL and chromosomes. Isoform Zeta interacts with BANF1/BAF and may sequester it in the cytoplasm. Mitosis-specific phosphorylation specifically abolishes its binding to lamin B and chromosomes. Post-translationally, citrullinated by PADI4. Expressed in many tissues. Most abundant in adult thymus and fetal liver.

Its subcellular location is the nucleus inner membrane. It is found in the cytoplasm. Its function is as follows. May help direct the assembly of the nuclear lamina and thereby help maintain the structural organization of the nuclear envelope. Possible receptor for attachment of lamin filaments to the inner nuclear membrane. May be involved in the control of initiation of DNA replication through its interaction with NAKAP95. In terms of biological role, thymopoietin (TP) and Thymopentin (TP5) may play a role in T-cell development and function. TP5 is an immunomodulating pentapeptide. The protein is Lamina-associated polypeptide 2, isoforms beta/gamma (TMPO) of Homo sapiens (Human).